We begin with the raw amino-acid sequence, 1226 residues long: Methionine synthase (1226 aa).

The Hcy-binding domain occupies 6–326 (RAQIEAQLKQ…EHIRHMAMAV (321 aa)). Zn(2+)-binding residues include cysteine 248, cysteine 311, and cysteine 312. The region spanning 357–618 (FVNVGERTNV…VPEKLREAVE (262 aa)) is the Pterin-binding domain. The B12-binding N-terminal domain maps to 651 to 745 (SALEWRTWSV…FINASKQAGS (95 aa)). Residues glutamate 695, 757–761 (GDVHD), histidine 760, serine 805, threonine 809, and alanine 861 each bind methylcob(III)alamin. Positions 747–882 (NGKILLATVK…SDELRPAFVE (136 aa)) constitute a B12-binding domain. An AdoMet activation domain is found at 898–1226 (KKPRTKPVTL…EKWLGPNING (329 aa)). Residues aspartate 948, arginine 1136, and 1191–1192 (YF) each bind S-adenosyl-L-methionine.

This sequence belongs to the vitamin-B12 dependent methionine synthase family. Methylcob(III)alamin is required as a cofactor. The cofactor is Zn(2+).

It catalyses the reaction (6S)-5-methyl-5,6,7,8-tetrahydrofolate + L-homocysteine = (6S)-5,6,7,8-tetrahydrofolate + L-methionine. The protein operates within amino-acid biosynthesis; L-methionine biosynthesis via de novo pathway; L-methionine from L-homocysteine (MetH route): step 1/1. In terms of biological role, catalyzes the transfer of a methyl group from methyl-cobalamin to homocysteine, yielding enzyme-bound cob(I)alamin and methionine. Subsequently, remethylates the cofactor using methyltetrahydrofolate. The chain is Methionine synthase (metH) from Vibrio vulnificus (strain CMCP6).